Here is a 485-residue protein sequence, read N- to C-terminus: NADH-quinone oxidoreductase subunit N (485 aa).

14 helical membrane-spanning segments follow: residues 8–28, 35–55, 71–91, 105–125, 127–147, 159–179, 203–223, 235–255, 271–291, 297–317, 326–346, 373–393, 408–430, and 450–470; these read LIAL…MLSI, FLNA…LWFV, GFAM…CTFA, FYLL…ANHL, SLFL…GYAF, YTIL…LVYA, LLAG…LVPF, PAPV…GVVM, VVLA…ALSQ, LLGY…IALQ, VGVY…VVSL, AAVM…LGFI, WWLV…RVAV, and YSAG…LGVW.

This sequence belongs to the complex I subunit 2 family. NDH-1 is composed of 13 different subunits. Subunits NuoA, H, J, K, L, M, N constitute the membrane sector of the complex.

It localises to the cell inner membrane. It catalyses the reaction a quinone + NADH + 5 H(+)(in) = a quinol + NAD(+) + 4 H(+)(out). In terms of biological role, NDH-1 shuttles electrons from NADH, via FMN and iron-sulfur (Fe-S) centers, to quinones in the respiratory chain. The immediate electron acceptor for the enzyme in this species is believed to be ubiquinone. Couples the redox reaction to proton translocation (for every two electrons transferred, four hydrogen ions are translocated across the cytoplasmic membrane), and thus conserves the redox energy in a proton gradient. The protein is NADH-quinone oxidoreductase subunit N of Shigella boydii serotype 4 (strain Sb227).